A 354-amino-acid polypeptide reads, in one-letter code: MKFVDEVKIHVKAGDGGDGAVAWRREKFIPRGGPAGGDGGNGGDVVLEVDPQLSTLLDYRYIREHKARNGEKGSGSDMNGKDGADLVLRVPPGTVVKDAATGEQLCDLGAAGERVVIAKGGRGGLGNMNFASSTNQAPRYAEDGTPGAERDLVLELKLLADVGIVGYPNAGKSTLISRISRARPKIADYPFTTLTPNLGVVGWRERSFVVADIPGLIEGAHAGAGLGHQFLRHVERCRVLIHLVEGANPEPGRAPKPDLDAINAELAAYSDELARKPQIVAVTKIDVPEARAAGVKLQKLLGRRKKPVPVHLVSAVTGEGLDALLDAVGRALFKEARPHRGGGGKKLAKPRARA.

Residues 1 to 159 (MKFVDEVKIH…RDLVLELKLL (159 aa)) form the Obg domain. Residues 160-333 (ADVGIVGYPN…LLDAVGRALF (174 aa)) form the OBG-type G domain. Residues 166–173 (GYPNAGKS), 191–195 (FTTLT), 212–215 (DIPG), 283–286 (TKID), and 314–316 (SAV) contribute to the GTP site. Residues Ser173 and Thr193 each contribute to the Mg(2+) site.

It belongs to the TRAFAC class OBG-HflX-like GTPase superfamily. OBG GTPase family. Monomer. It depends on Mg(2+) as a cofactor.

It is found in the cytoplasm. Its function is as follows. An essential GTPase which binds GTP, GDP and possibly (p)ppGpp with moderate affinity, with high nucleotide exchange rates and a fairly low GTP hydrolysis rate. Plays a role in control of the cell cycle, stress response, ribosome biogenesis and in those bacteria that undergo differentiation, in morphogenesis control. The chain is GTPase Obg from Anaeromyxobacter dehalogenans (strain 2CP-1 / ATCC BAA-258).